The primary structure comprises 176 residues: Thiol-disulfide oxidoreductase ResA (176 aa).

A helical; Signal-anchor for type II membrane protein transmembrane segment spans residues 11–30 (LSILAVISVALGYTFYSNFF). Residues 36–176 (ARAGEQAVNF…EFMELIKPEA (141 aa)) enclose the Thioredoxin domain. A disulfide bridge links Cys74 with Cys77.

Belongs to the thioredoxin family. ResA subfamily.

The protein resides in the cell membrane. It functions in the pathway protein modification; cytochrome c assembly. Its function is as follows. Thiol-disulfide oxidoreductase which is required in disulfide reduction during c-type cytochrome synthesis. May accept reducing equivalents from CcdA, leading to breakage of disulfide bonds in apocytochrome c; following this reduction heme can be covalently attached. This is Thiol-disulfide oxidoreductase ResA from Halalkalibacterium halodurans (strain ATCC BAA-125 / DSM 18197 / FERM 7344 / JCM 9153 / C-125) (Bacillus halodurans).